An 891-amino-acid polypeptide reads, in one-letter code: MAVTNVAELNALVERVKKAQREYASFTQEQVDKIFRAAALAAADARIPLAKMAVAESGMGIVEDKVIKNHFASEYIYNAYKDEKTCGVLSEDDTFGTITIAEPIGIICGIVPTTNPTSTAIFKSLISLKTRNAIIFSPHPRAKDATNKAADIVLQAAIAAGAPKDLIGWIDQPSVELSNALMHHPDINLILATGGPGMVKAAYSSGKPAIGVGAGNTPVVIDETADIKRAVASVLMSKTFDNGVICASEQSVVVVDSVYDAVRERFATHGGYLLQGKELKAVQDVILKNGALNAAIVGQPAYKIAELAGFSVPENTKILIGEVTVVDESEPFAHEKLSPTLAMYRAKDFEDAVEKAEKLVAMGGIGHTSCLYTDQDNQPARVSYFGQKMKTARILINTPASQGGIGDLYNFKLAPSLTLGCGSWGGNSISENVGPKHLINKKTVAKRAENMLWHKLPKSIYFRRGSLPIALDEVITDGHKRALIVTDRFLFNNGYADQITSVLKAAGVETEVFFEVEADPTLSIVRKGAELANSFKPDVIIALGGGSPMDAAKIMWVMYEHPETHFEELALRFMDIRKRIYKFPKMGVKAKMIAVTTTSGTGSEVTPFAVVTDDATGQKYPLADYALTPDMAIVDANLVMDMPKSLCAFGGLDAVTHAMEAYVSVLASEFSDGQALQALKLLKEYLPASYHEGSKNPVARERVHSAATIAGIAFANAFLGVCHSMAHKLGSQFHIPHGLANALLICNVIRYNANDNPTKQTAFSQYDRPQARRRYAEIADHLGLSAPGDRTAAKIEKLLAWLETLKAELGIPKSIREAGVQEADFLANVDKLSEDAFDDQCTGANPRYPLISELKQILLDTYYGRDYVEGETAAKKEAAPAKAEKKAKKSA.

The interval 2 to 440 is aldehyde dehydrogenase; that stretch reads AVTNVAELNA…ENVGPKHLIN (439 aa). Residues 110 to 115, Gly-195, and Gly-213 each bind NAD(+); that span reads IVPTTN. Catalysis depends on Cys-246, which acts as the Nucleophile. The NAD(+) site is built by Glu-335 and Leu-419. The linker stretch occupies residues 441–448; the sequence is KKTVAKRA. Positions 449–891 are alcohol dehydrogenase; sequence ENMLWHKLPK…KAEKKAKKSA (443 aa). Residues Asp-487, Asp-519, 546–550, 597–598, Val-610, Lys-619, and Leu-638 each bind NAD(+); these read GSPMD and TT. The Fe cation site is built by Asp-653, His-657, His-723, and His-737.

In the N-terminal section; belongs to the aldehyde dehydrogenase family. This sequence in the C-terminal section; belongs to the iron-containing alcohol dehydrogenase family. In terms of assembly, forms long filaments, called spirosomes. Requires Fe(2+) as cofactor.

The catalysed reaction is acetaldehyde + NAD(+) + CoA = acetyl-CoA + NADH + H(+). It catalyses the reaction ethanol + NAD(+) = acetaldehyde + NADH + H(+). The enzyme catalyses a primary alcohol + NAD(+) = an aldehyde + NADH + H(+). Functionally, under fermentative conditions, catalyzes the sequential NADH-dependent reduction of acetyl-CoA to acetaldehyde and then to ethanol. Plays an important role in virulence and is critical for proper regulation of virulence gene expression. The sequence is that of Bifunctional aldehyde-alcohol dehydrogenase AdhE from Escherichia coli O157:H7.